Reading from the N-terminus, the 208-residue chain is MKGLFVTIEGPEGSGKSTLITKLLPYFENKGQKVIATREPGGIAISEEIRTILHKKEYTTMEARTEALLYAAARRQHLVEKVMPALEADQLVLCDRFIDSSLAYQGYARGLGIDKVYEMNRFATEDCMPSLTIYLDIAPEVGLARIEKDAAREVNRLDMESIAFHRLVREGYLQIVERFKDRIVVVNADQPMENVVEEVIQLIESKLL.

10–17 (GPEGSGKS) contributes to the ATP binding site.

Belongs to the thymidylate kinase family.

It carries out the reaction dTMP + ATP = dTDP + ADP. Functionally, phosphorylation of dTMP to form dTDP in both de novo and salvage pathways of dTTP synthesis. The protein is Thymidylate kinase of Bacillus cytotoxicus (strain DSM 22905 / CIP 110041 / 391-98 / NVH 391-98).